Reading from the N-terminus, the 600-residue chain is Glutamine--fructose-6-phosphate aminotransferase [isomerizing] (600 aa).

Catalysis depends on cysteine 2, which acts as the Nucleophile; for GATase activity. Residues 2–217 (CGIVGFIGEQ…DKEIVIVTKE (216 aa)) form the Glutamine amidotransferase type-2 domain. SIS domains are found at residues 283 to 422 (IRNA…AKGE) and 452 to 590 (LAKQ…VDKP). Lysine 595 (for Fru-6P isomerization activity) is an active-site residue.

As to quaternary structure, homodimer.

Its subcellular location is the cytoplasm. It catalyses the reaction D-fructose 6-phosphate + L-glutamine = D-glucosamine 6-phosphate + L-glutamate. In terms of biological role, catalyzes the first step in hexosamine metabolism, converting fructose-6P into glucosamine-6P using glutamine as a nitrogen source. The sequence is that of Glutamine--fructose-6-phosphate aminotransferase [isomerizing] from Bacillus cereus (strain ATCC 14579 / DSM 31 / CCUG 7414 / JCM 2152 / NBRC 15305 / NCIMB 9373 / NCTC 2599 / NRRL B-3711).